Here is a 225-residue protein sequence, read N- to C-terminus: UPF0758 protein NMCC_1157 (225 aa).

An MPN domain is found at Val-102–Met-224. Zn(2+)-binding residues include His-173, His-175, and Asp-186. Positions His-173 to Asp-186 match the JAMM motif motif.

This sequence belongs to the UPF0758 family.

In Neisseria meningitidis serogroup C (strain 053442), this protein is UPF0758 protein NMCC_1157.